The chain runs to 190 residues: NADH-quinone oxidoreductase subunit B (190 aa).

The [4Fe-4S] cluster site is built by Cys-39, Cys-40, Cys-104, and Cys-135.

It belongs to the complex I 20 kDa subunit family. NDH-1 is composed of 14 different subunits. Subunits NuoB, C, D, E, F, and G constitute the peripheral sector of the complex. It depends on [4Fe-4S] cluster as a cofactor.

The protein resides in the cell inner membrane. The catalysed reaction is a quinone + NADH + 5 H(+)(in) = a quinol + NAD(+) + 4 H(+)(out). NDH-1 shuttles electrons from NADH, via FMN and iron-sulfur (Fe-S) centers, to quinones in the respiratory chain. The immediate electron acceptor for the enzyme in this species is believed to be a menaquinone. Couples the redox reaction to proton translocation (for every two electrons transferred, four hydrogen ions are translocated across the cytoplasmic membrane), and thus conserves the redox energy in a proton gradient. This is NADH-quinone oxidoreductase subunit B from Chlorobium phaeobacteroides (strain BS1).